The primary structure comprises 667 residues: Alpha-1,4-glucan:maltose-1-phosphate maltosyltransferase (667 aa).

Alpha-maltose 1-phosphate contacts are provided by Lys261, Gln321, and Asp356. The active-site Nucleophile is the Asp392. Alpha-maltose 1-phosphate is bound at residue Asn393. The active-site Proton donor is the Glu421. An alpha-maltose 1-phosphate-binding site is contributed by 534–535 (KY).

Belongs to the glycosyl hydrolase 13 family. GlgE subfamily. Homodimer.

The enzyme catalyses alpha-maltose 1-phosphate + [(1-&gt;4)-alpha-D-glucosyl](n) = [(1-&gt;4)-alpha-D-glucosyl](n+2) + phosphate. In terms of biological role, maltosyltransferase that uses maltose 1-phosphate (M1P) as the sugar donor to elongate linear or branched alpha-(1-&gt;4)-glucans. Is involved in a branched alpha-glucan biosynthetic pathway from trehalose, together with TreS, Mak and GlgB. This Methylacidiphilum infernorum (isolate V4) (Methylokorus infernorum (strain V4)) protein is Alpha-1,4-glucan:maltose-1-phosphate maltosyltransferase.